The primary structure comprises 404 residues: Cysteine desulfurase IscS (404 aa).

Pyridoxal 5'-phosphate-binding positions include 75 to 76 (AT), Asn-155, Gln-183, and 203 to 205 (SGH). Lys-206 carries the post-translational modification N6-(pyridoxal phosphate)lysine. Residue Thr-243 coordinates pyridoxal 5'-phosphate. The active-site Cysteine persulfide intermediate is Cys-328. Residue Cys-328 coordinates [2Fe-2S] cluster.

Belongs to the class-V pyridoxal-phosphate-dependent aminotransferase family. NifS/IscS subfamily. Homodimer. Forms a heterotetramer with IscU, interacts with other sulfur acceptors. Pyridoxal 5'-phosphate is required as a cofactor.

The protein resides in the cytoplasm. The catalysed reaction is (sulfur carrier)-H + L-cysteine = (sulfur carrier)-SH + L-alanine. It participates in cofactor biosynthesis; iron-sulfur cluster biosynthesis. Functionally, master enzyme that delivers sulfur to a number of partners involved in Fe-S cluster assembly, tRNA modification or cofactor biosynthesis. Catalyzes the removal of elemental sulfur and selenium atoms from cysteine and selenocysteine to produce alanine. Functions as a sulfur delivery protein for Fe-S cluster synthesis onto IscU, an Fe-S scaffold assembly protein, as well as other S acceptor proteins. Also functions as a selenium delivery protein in the pathway for the biosynthesis of selenophosphate. The protein is Cysteine desulfurase IscS of Salmonella typhi.